Consider the following 278-residue polypeptide: NAD-capped RNA hydrolase NudC (278 aa).

Residue R84 coordinates substrate. Residues C114 and C117 each coordinate Zn(2+). E127 serves as a coordination point for substrate. Residues C132 and C135 each contribute to the Zn(2+) site. Y140 is a substrate binding site. Residues 141-265 (PRLSPSMIVL…IARHLIDLYL (125 aa)) enclose the Nudix hydrolase domain. A174, E190, and E194 together coordinate a divalent metal cation. Residues 175–196 (GFVEAGESVEQCVVREVREEVG) carry the Nudix box motif. 208 to 215 (QNWPFPHS) lines the substrate pocket. E235 lines the a divalent metal cation pocket. A257 is a substrate binding site.

Belongs to the Nudix hydrolase family. NudC subfamily. Homodimer. Requires Mg(2+) as cofactor. Mn(2+) is required as a cofactor. It depends on Zn(2+) as a cofactor.

It carries out the reaction a 5'-end NAD(+)-phospho-ribonucleoside in mRNA + H2O = a 5'-end phospho-adenosine-phospho-ribonucleoside in mRNA + beta-nicotinamide D-ribonucleotide + 2 H(+). The enzyme catalyses NAD(+) + H2O = beta-nicotinamide D-ribonucleotide + AMP + 2 H(+). The catalysed reaction is NADH + H2O = reduced beta-nicotinamide D-ribonucleotide + AMP + 2 H(+). In terms of biological role, mRNA decapping enzyme that specifically removes the nicotinamide adenine dinucleotide (NAD) cap from a subset of mRNAs by hydrolyzing the diphosphate linkage to produce nicotinamide mononucleotide (NMN) and 5' monophosphate mRNA. The NAD-cap is present at the 5'-end of some mRNAs and stabilizes RNA against 5'-processing. Has preference for mRNAs with a 5'-end purine. Catalyzes the hydrolysis of a broad range of dinucleotide pyrophosphates. This Pseudomonas aeruginosa (strain LESB58) protein is NAD-capped RNA hydrolase NudC.